A 419-amino-acid chain; its full sequence is Alpha-galactosidase A (419 aa).

The N-terminal stretch at methionine 1–alanine 31 is a signal peptide. Intrachain disulfides connect cysteine 52–cysteine 94 and cysteine 56–cysteine 63. Residue asparagine 139 is glycosylated (N-linked (GlcNAc...) asparagine). A disulfide bond links cysteine 142 and cysteine 172. The Nucleophile role is filled by aspartate 170. The residue at position 186 (tyrosine 186) is a Phosphotyrosine. Asparagine 192 carries N-linked (GlcNAc...) asparagine glycosylation. An intrachain disulfide couples cysteine 202 to cysteine 223. Glutamate 203–tyrosine 207 lines the substrate pocket. A glycan (N-linked (GlcNAc...) asparagine) is linked at asparagine 215. Catalysis depends on aspartate 231, which acts as the Proton donor. A disulfide bridge links cysteine 378 with cysteine 382.

It belongs to the glycosyl hydrolase 27 family. Homodimer.

Its subcellular location is the lysosome. It catalyses the reaction Hydrolysis of terminal, non-reducing alpha-D-galactose residues in alpha-D-galactosides, including galactose oligosaccharides, galactomannans and galactolipids.. The catalysed reaction is a globoside Gb3Cer (d18:1(4E)) + H2O = a beta-D-Gal-(1-&gt;4)-beta-D-Glc-(1&lt;-&gt;1)-Cer(d18:1(4E)) + D-galactose. It carries out the reaction a globoside Gb3Cer + H2O = a beta-D-galactosyl-(1-&gt;4)-beta-D-glucosyl-(1&lt;-&gt;1)-ceramide + D-galactose. Galactosylgalactosylglucosylceramidase activity is stimulated by saposin B and ammonium chloride. Functionally, catalyzes the hydrolysis of glycosphingolipids and participates in their degradation in the lysosome. The sequence is that of Alpha-galactosidase A from Mus musculus (Mouse).